Reading from the N-terminus, the 38-residue chain is Photosystem II reaction center protein L (38 aa).

Residues 17–37 form a helical membrane-spanning segment; sequence SLFWGLLLIFVLAVLFSSYFF.

The protein belongs to the PsbL family. As to quaternary structure, PSII is composed of 1 copy each of membrane proteins PsbA, PsbB, PsbC, PsbD, PsbE, PsbF, PsbH, PsbI, PsbJ, PsbK, PsbL, PsbM, PsbT, PsbX, PsbY, PsbZ, Psb30/Ycf12, at least 3 peripheral proteins of the oxygen-evolving complex and a large number of cofactors. It forms dimeric complexes.

The protein localises to the plastid. The protein resides in the chloroplast thylakoid membrane. Its function is as follows. One of the components of the core complex of photosystem II (PSII). PSII is a light-driven water:plastoquinone oxidoreductase that uses light energy to abstract electrons from H(2)O, generating O(2) and a proton gradient subsequently used for ATP formation. It consists of a core antenna complex that captures photons, and an electron transfer chain that converts photonic excitation into a charge separation. This subunit is found at the monomer-monomer interface and is required for correct PSII assembly and/or dimerization. The polypeptide is Photosystem II reaction center protein L (Gracilaria tenuistipitata var. liui (Red alga)).